The chain runs to 190 residues: UPF0301 protein Pfl01_5311 (190 aa).

This sequence belongs to the UPF0301 (AlgH) family.

This is UPF0301 protein Pfl01_5311 from Pseudomonas fluorescens (strain Pf0-1).